A 607-amino-acid chain; its full sequence is Bifunctional endo-1,4-beta-xylanase A (607 aa).

The signal sequence occupies residues 1–18 (MRTIKFFFAVAIATVAKA). Positions 35–242 (NGQTQHKGVA…SSGIADVTKL (208 aa)) constitute a GH11 1 domain. Glu141 acts as the Nucleophile in catalysis. Glu223 (proton donor) is an active-site residue. Polar residues predominate over residues 248 to 272 (QKGSNPAPTSTGTVPSSSAGGSTAN). A disordered region spans residues 248–284 (QKGSNPAPTSTGTVPSSSAGGSTANGKKFTVGNGQNQ). Residues 280-487 (NGQNQHKGVN…SSGVADVTLL (208 aa)) enclose the GH11 2 domain. Glu386 functions as the Nucleophile in the catalytic mechanism. Residue Glu474 is the Proton donor of the active site. A disordered region spans residues 493 to 514 (PKGSSPATSAAPRTTTRTTTRT). Positions 496–514 (SSPATSAAPRTTTRTTTRT) are enriched in low complexity. 2 consecutive CBM10 domains span residues 523-563 (KCSA…CGCG) and 566-606 (QCSS…CGCG).

The protein belongs to the glycosyl hydrolase 11 (cellulase G) family.

It catalyses the reaction Endohydrolysis of (1-&gt;4)-beta-D-xylosidic linkages in xylans.. It participates in glycan degradation; xylan degradation. In terms of biological role, hydrolyzes xylans into xylobiose and xylose. The protein is Bifunctional endo-1,4-beta-xylanase A (XYNA) of Neocallimastix patriciarum (Rumen fungus).